The following is an 819-amino-acid chain: Molybdenum cofactor sulfurase (819 aa).

At K271 the chain carries N6-(pyridoxal phosphate)lysine. C430 is an active-site residue. Positions 650-817 (CKLLRYSSST…IGVGEEVNPD (168 aa)) constitute an MOSC domain.

This sequence belongs to the class-V pyridoxal-phosphate-dependent aminotransferase family. MOCOS subfamily. Requires pyridoxal 5'-phosphate as cofactor. In terms of tissue distribution, ubiquitously expressed.

The enzyme catalyses Mo-molybdopterin + L-cysteine + AH2 = thio-Mo-molybdopterin + L-alanine + A + H2O. It participates in cofactor biosynthesis; molybdopterin biosynthesis. Its function is as follows. Sulfurates the molybdenum cofactor. Sulfation of molybdenum is essential for xanthine dehydrogenase (XDH) and aldehyde oxidase (ADO) enzymes in which molybdenum cofactor is liganded by 1 oxygen and 1 sulfur atom in active form. Modulates cold stress- and osmotic stress-responsive gene expression by acting as key regulator of abscisic acid (ABA) biosynthesis. This chain is Molybdenum cofactor sulfurase (ABA3), found in Arabidopsis thaliana (Mouse-ear cress).